Consider the following 152-residue polypeptide: D-aminoacyl-tRNA deacylase (152 aa).

The Gly-cisPro motif, important for rejection of L-amino acids signature appears at 137–138; it reads GP.

This sequence belongs to the DTD family. As to quaternary structure, homodimer.

The protein resides in the cytoplasm. It catalyses the reaction glycyl-tRNA(Ala) + H2O = tRNA(Ala) + glycine + H(+). The enzyme catalyses a D-aminoacyl-tRNA + H2O = a tRNA + a D-alpha-amino acid + H(+). An aminoacyl-tRNA editing enzyme that deacylates mischarged D-aminoacyl-tRNAs. Also deacylates mischarged glycyl-tRNA(Ala), protecting cells against glycine mischarging by AlaRS. Acts via tRNA-based rather than protein-based catalysis; rejects L-amino acids rather than detecting D-amino acids in the active site. By recycling D-aminoacyl-tRNA to D-amino acids and free tRNA molecules, this enzyme counteracts the toxicity associated with the formation of D-aminoacyl-tRNA entities in vivo and helps enforce protein L-homochirality. The chain is D-aminoacyl-tRNA deacylase from Geobacillus sp. (strain WCH70).